A 271-amino-acid polypeptide reads, in one-letter code: Hydroxyethylthiazole kinase (271 aa).

A substrate-binding site is contributed by Met45. 2 residues coordinate ATP: Arg121 and Thr168. Gly195 lines the substrate pocket.

Belongs to the Thz kinase family. Mg(2+) is required as a cofactor.

The enzyme catalyses 5-(2-hydroxyethyl)-4-methylthiazole + ATP = 4-methyl-5-(2-phosphooxyethyl)-thiazole + ADP + H(+). Its pathway is cofactor biosynthesis; thiamine diphosphate biosynthesis; 4-methyl-5-(2-phosphoethyl)-thiazole from 5-(2-hydroxyethyl)-4-methylthiazole: step 1/1. Its function is as follows. Catalyzes the phosphorylation of the hydroxyl group of 4-methyl-5-beta-hydroxyethylthiazole (THZ). In Bacillus pumilus (strain SAFR-032), this protein is Hydroxyethylthiazole kinase.